We begin with the raw amino-acid sequence, 167 residues long: NADH-quinone oxidoreductase subunit I (167 aa).

4Fe-4S ferredoxin-type domains lie at 59-88 and 98-127; these read RKYKNGEERCIACKLCEAICPAQAITIEAQ and VRYDIDMTKCIYCGFCQEACPVDAIVEGPN. [4Fe-4S] cluster is bound by residues Cys-68, Cys-71, Cys-74, Cys-78, Cys-107, Cys-110, Cys-113, and Cys-117.

Belongs to the complex I 23 kDa subunit family. NDH-1 is composed of 14 different subunits. Subunits NuoA, H, J, K, L, M, N constitute the membrane sector of the complex. The cofactor is [4Fe-4S] cluster.

It is found in the cell inner membrane. It catalyses the reaction a quinone + NADH + 5 H(+)(in) = a quinol + NAD(+) + 4 H(+)(out). Its function is as follows. NDH-1 shuttles electrons from NADH, via FMN and iron-sulfur (Fe-S) centers, to quinones in the respiratory chain. The immediate electron acceptor for the enzyme in this species is believed to be ubiquinone. Couples the redox reaction to proton translocation (for every two electrons transferred, four hydrogen ions are translocated across the cytoplasmic membrane), and thus conserves the redox energy in a proton gradient. This chain is NADH-quinone oxidoreductase subunit I, found in Ehrlichia canis (strain Jake).